Reading from the N-terminus, the 134-residue chain is Methylglyoxal synthase (134 aa).

The region spanning 1–134 is the MGS-like domain; the sequence is MHIALIAHDE…DWRDLRRNDE (134 aa). Residues histidine 8, lysine 12, 34 to 37, and 54 to 55 each bind substrate; these read TGTT and SG. Aspartate 60 acts as the Proton donor/acceptor in catalysis. Histidine 87 serves as a coordination point for substrate.

This sequence belongs to the methylglyoxal synthase family.

It catalyses the reaction dihydroxyacetone phosphate = methylglyoxal + phosphate. In terms of biological role, catalyzes the formation of methylglyoxal from dihydroxyacetone phosphate. In Listeria innocua serovar 6a (strain ATCC BAA-680 / CLIP 11262), this protein is Methylglyoxal synthase.